Reading from the N-terminus, the 819-residue chain is MSLSSAFRTVTNDPGIITWRIEKMELVLVPLSAHGNFYEGDCYIILSTRRVGSLLSQNIHFWIGKDSSQDEQSCAAIYTTQLDDYLGGSPVQHREVQYHESDTFRGYFKRGIIYKKGGVASGMKHVETNTYDVKRLLHVKGKRNIRATEVEMSWDSFNQGDVFLLDLGMVIIQWNGPESNSGERLKAMLLAKDIRDRERGGRAEIGVIEGDKEAASPELMTVLQNTLGRRSIIKPAVPDEVTDQQQKSTIMLYHVSDTTGQLSVTEVATRPLVQELLNHDDCYILDQSGTKIYVWKGKGATKVEKQAAMSKALDFIKMKGYPSSTNVETVNDGAESAMFKQLFQKWSVKDQTTGLGKTFSIGKIAKIFQDKFDVTLLHTKPEVAAQERMVDDGNGKVEVWRIENLELVPVEYQWHGFFYGGDCYLVLYTYDVNGKPCYILYIWQGRHASQDELAASAYQAVEVDQQFGGAPVQVRVSMGKEPRHFMAIFKGKLVIYEGGTSRKGNVEPDPPVRLFQIHGNDKSNTKAVEVSASASSLNSNDVFLLWTQAEHYLWYGKGSSGDERAMAKELAELLCDGDADTVAEGQEPPEFWDLLGGKAPYANDKRLQQETLDIQVRLFECSNKTGRFLVTEVTDFTQDDLSPGDVMLLDTWDQVFLWIGAEANATEKEGALSTAQEYLVTHPSGRDPDTPILIIKQGFEPPTFTGWFLAWDPHIWSEGKSYEQLKNELGDATAIVRITTDMKNATLSLNSSESGPKYYPVEVLLKSQDQELPEDVDPTKKENYLSERDFVSVFGITRGQFVSLPGWKQLQLKKEAGLF.

The core stretch occupies residues 1–731 (MSLSSAFRTV…YEQLKNELGD (731 aa)). A Gelsolin-like 1 repeat occupies 24–105 (MELVLVPLSA…VQYHESDTFR (82 aa)). Phosphotyrosine is present on Tyr-85. Residues 109-116 (KRGIIYKK) and 135-143 (RLLHVKGKR) contribute to the a 1,2-diacyl-sn-glycero-3-phospho-(1D-myo-inositol-4,5-bisphosphate) site. Gelsolin-like repeat units lie at residues 144 to 215 (NIRA…KEAA), 265 to 339 (TEVA…SAMF), 407 to 486 (LVPV…RHFM), 524 to 592 (NTKA…PEFW), and 631 to 704 (TEVT…PPTF). The interval 628 to 819 (FLVTEVTDFT…LQLKKEAGLF (192 aa)) is required for interaction with F-actin. The tract at residues 731–819 (DATAIVRITT…LQLKKEAGLF (89 aa)) is headpiece. The 67-residue stretch at 753–819 (ESGPKYYPVE…LQLKKEAGLF (67 aa)) folds into the HP domain. Tyr-758 is modified (phosphotyrosine).

This sequence belongs to the villin/gelsolin family. In terms of assembly, associates (via C-terminus) with actin. Interacts with F-actin. Interacts with SCARF1; the interaction occurs in embryonic dorsal root ganglions at 18 dpc and induces neurite-like outgrowth. Interacts with PLCE1. Interacts with ACTR2 and ACTR3; associates with the ARP2/3 complex. Expressed in dorsal root ganglion (DRG) neurons and superior cervical ganglia (SCG). Expressed in podocytes.

The protein localises to the cytoplasm. Its subcellular location is the cytoskeleton. It is found in the cell projection. It localises to the neuron projection. The protein resides in the axon. The protein localises to the lamellipodium. Its subcellular location is the cell junction. It is found in the focal adhesion. Functionally, ca(2+)-regulated actin-binding protein which plays an important role in actin bundling. May have a unique function in the morphogenesis of neuronal cells which form ganglia. Required for SREC1-mediated regulation of neurite-like outgrowth. Plays a role in regenerative sensory axon outgrowth and remodeling processes after peripheral injury in neonates. Involved in the formation of long fine actin-containing filopodia-like structures in fibroblast. Plays a role in ciliogenesis. In podocytes, controls lamellipodia formation through the regulation of EGF-induced diacylglycerol generation by PLCE1 and ARP2/3 complex assembly. This Rattus norvegicus (Rat) protein is Advillin.